A 360-amino-acid polypeptide reads, in one-letter code: Thiol protease SEN102 (360 aa).

Residues methionine 1–alanine 20 form the signal peptide. A propeptide spans glutamine 21 to serine 133 (activation peptide). Intrachain disulfides connect cysteine 151/cysteine 193, cysteine 185/cysteine 225, and cysteine 283/cysteine 335. Cysteine 154 is an active-site residue. Residues histidine 289 and asparagine 310 contribute to the active site. Asparagine 353 is a glycosylation site (N-linked (GlcNAc...) asparagine). Positions arginine 357–leucine 360 match the Prevents secretion from ER motif.

This sequence belongs to the peptidase C1 family.

It localises to the endoplasmic reticulum lumen. In Hemerocallis sp. (Daylily), this protein is Thiol protease SEN102 (SEN102).